Reading from the N-terminus, the 424-residue chain is Myb family transcription factor RLI1 (424 aa).

A disordered region spans residues 144-165; the sequence is RPQKRDSGERTPLPPPSQQQHQ. The region spanning 238–298 is the HTH myb-type domain; it reads APSKTRIRWT…HLQKYRIAKY (61 aa). A DNA-binding region (H-T-H motif) is located at residues 269–294; the sequence is PKGILKLMNSDGLTIYHIKSHLQKYR. The LHEQLE motif lies at 342 to 347; the sequence is LHEQLE. Residues 342-391 adopt a coiled-coil conformation; that stretch reads LHEQLEIQRNLQLRIEEQGKRLQKMFEDQLKASRSVMEPQELDDVVAFAA.

It belongs to the MYB-CC family. Homodimer. Interacts with PHR2 in the nucleus. Interacts with SPX1 and SPX2 in the nucleus; these interactions prevent binding to the promoters of target genes, thus regulating negatively leaf inclination in response to phosphate (Pi) starvation.

The protein localises to the nucleus. In terms of biological role, transcription factor binding to specific DNA sequences of target genes promoters, such as the motif R1BS 5'-NAKATNCN-3' and the motif P1BS 5'-GNATATNC-3' to trigger their expression. Nitrate-induced component involved in modulating phosphate (Pi) response and homeostasis together with PHR2; activates directly the expression of Pi starvation-induced (PSI) genes upon nitrate disponibility, thus triggering the nitrate-induced phosphate response (NIPR) promoting Pi uptake activity. Involved in the shoot architecture; positively regulates leaf inclination by affecting lamina joint cell elongation via the direct promotion of ILI4/BU1 and BC1 genes expression, especially in response to phosphate (Pi) availability. Regulates both brassinolide (BL) biosynthesis and signaling by directly activating BL-biosynthesis and signaling genes. In Oryza sativa subsp. indica (Rice), this protein is Myb family transcription factor RLI1.